The following is a 207-amino-acid chain: Large ribosomal subunit protein uL4 (207 aa).

The segment at 48–87 (THAVKNRSAVSGGGKKPWRQKGTGRARQGSIRSPQFRGGG) is disordered.

Belongs to the universal ribosomal protein uL4 family. Part of the 50S ribosomal subunit.

Functionally, one of the primary rRNA binding proteins, this protein initially binds near the 5'-end of the 23S rRNA. It is important during the early stages of 50S assembly. It makes multiple contacts with different domains of the 23S rRNA in the assembled 50S subunit and ribosome. Forms part of the polypeptide exit tunnel. The polypeptide is Large ribosomal subunit protein uL4 (Limosilactobacillus reuteri subsp. reuteri (strain JCM 1112) (Lactobacillus reuteri)).